The primary structure comprises 666 residues: Long-chain-fatty-acid--CoA ligase ACSBG2 (666 aa).

Residues threonine 230–lysine 238, glutamate 418–serine 423, aspartate 496, and arginine 624 each bind ATP.

This sequence belongs to the ATP-dependent AMP-binding enzyme family. Bubblegum subfamily. Testis-specific.

Its subcellular location is the cytoplasm. The protein resides in the membrane. The enzyme catalyses a long-chain fatty acid + ATP + CoA = a long-chain fatty acyl-CoA + AMP + diphosphate. It catalyses the reaction (5Z,8Z,11Z,14Z)-eicosatetraenoate + ATP + CoA = (5Z,8Z,11Z,14Z)-eicosatetraenoyl-CoA + AMP + diphosphate. The catalysed reaction is hexadecanoate + ATP + CoA = hexadecanoyl-CoA + AMP + diphosphate. It carries out the reaction (9Z)-octadecenoate + ATP + CoA = (9Z)-octadecenoyl-CoA + AMP + diphosphate. The enzyme catalyses (9Z,12Z)-octadecadienoate + ATP + CoA = (9Z,12Z)-octadecadienoyl-CoA + AMP + diphosphate. It catalyses the reaction tetracosanoate + ATP + CoA = tetracosanoyl-CoA + AMP + diphosphate. Its function is as follows. Catalyzes the conversion of fatty acids such as long chain and very long-chain fatty acids to their active form acyl-CoAs for both synthesis of cellular lipids, and degradation via beta-oxidation. Can activate diverse saturated, monosaturated and polyunsaturated fatty acids. Has increased ability to activate oleic and linoleic acid. May play a role in spermatogenesis. The sequence is that of Long-chain-fatty-acid--CoA ligase ACSBG2 from Homo sapiens (Human).